Consider the following 82-residue polypeptide: Transcription elongation factor 1 homolog (82 aa).

Positions 26, 29, 50, and 53 each coordinate Zn(2+).

It belongs to the ELOF1 family.

It localises to the nucleus. Transcription elongation factor implicated in the maintenance of proper chromatin structure in actively transcribed regions. In Drosophila melanogaster (Fruit fly), this protein is Transcription elongation factor 1 homolog.